The chain runs to 418 residues: Putative ion-transport protein YfeO (418 aa).

The next 12 helical transmembrane spans lie at L10–V30, D54–I74, A99–P119, E120–P140, I149–I169, L186–P206, I223–C243, V258–V278, D300–F320, G322–H342, V343–V363, and L371–M391.

Belongs to the chloride channel (TC 2.A.49) family.

The protein resides in the cell membrane. The chain is Putative ion-transport protein YfeO from Escherichia coli O7:K1 (strain IAI39 / ExPEC).